The sequence spans 241 residues: Meiotically up-regulated gene 130 protein (241 aa).

The protein localises to the mitochondrion. Has a role in meiosis. The polypeptide is Meiotically up-regulated gene 130 protein (mug130) (Schizosaccharomyces pombe (strain 972 / ATCC 24843) (Fission yeast)).